The following is a 449-amino-acid chain: Adenylyltransferase and sulfurtransferase MOCS3 (449 aa).

ATP contacts are provided by residues glycine 96, aspartate 117, 124–128 (SNLHR), lysine 141, and 185–186 (DN). Residues cysteine 227 and cysteine 230 each coordinate Zn(2+). Cysteine 244 functions as the Glycyl thioester intermediate; for adenylyltransferase activity in the catalytic mechanism. Residues cysteine 302 and cysteine 305 each coordinate Zn(2+). A Rhodanese domain is found at 351 to 447 (QDKPHLLLDV…WTNQIDENFP (97 aa)). Catalysis depends on cysteine 406, which acts as the Cysteine persulfide intermediate; for sulfurtransferase activity.

It in the N-terminal section; belongs to the HesA/MoeB/ThiF family. UBA4 subfamily. The cofactor is Zn(2+).

The protein localises to the cytoplasm. It localises to the cytosol. It catalyses the reaction [molybdopterin-synthase sulfur-carrier protein]-C-terminal Gly-Gly + ATP + H(+) = [molybdopterin-synthase sulfur-carrier protein]-C-terminal Gly-Gly-AMP + diphosphate. The enzyme catalyses [molybdopterin-synthase sulfur-carrier protein]-C-terminal Gly-Gly-AMP + S-sulfanyl-L-cysteinyl-[cysteine desulfurase] + AH2 = [molybdopterin-synthase sulfur-carrier protein]-C-terminal-Gly-aminoethanethioate + L-cysteinyl-[cysteine desulfurase] + A + AMP + 2 H(+). The protein operates within tRNA modification; 5-methoxycarbonylmethyl-2-thiouridine-tRNA biosynthesis. It participates in cofactor biosynthesis; molybdopterin biosynthesis. In terms of biological role, plays a central role in 2-thiolation of mcm(5)S(2)U at tRNA wobble positions of cytosolic tRNA(Lys), tRNA(Glu) and tRNA(Gln). Also essential during biosynthesis of the molybdenum cofactor. Acts by mediating the C-terminal thiocarboxylation of sulfur carriers URM1 and MOCS2A. Its N-terminus first activates URM1 and MOCS2A as acyl-adenylates (-COAMP), then the persulfide sulfur on the catalytic cysteine is transferred to URM1 and MOCS2A to form thiocarboxylation (-COSH) of their C-terminus. The reaction probably involves hydrogen sulfide that is generated from the persulfide intermediate and that acts as a nucleophile towards URM1 and MOCS2A. Subsequently, a transient disulfide bond is formed. Does not use thiosulfate as sulfur donor; NFS1 probably acting as a sulfur donor for thiocarboxylation reactions. This Drosophila grimshawi (Hawaiian fruit fly) protein is Adenylyltransferase and sulfurtransferase MOCS3.